The primary structure comprises 427 residues: Protein TolB homolog (427 aa).

A signal peptide spans 1 to 20; that stretch reads MLRRIFVSTFLVFGIVSLYA.

Belongs to the TolB family.

It localises to the periplasm. The protein is Protein TolB homolog of Chlamydia caviae (strain ATCC VR-813 / DSM 19441 / 03DC25 / GPIC) (Chlamydophila caviae).